A 140-amino-acid chain; its full sequence is L-fucose mutarotase (140 aa).

The active-site Proton donor is the histidine 22. Substrate contacts are provided by residues aspartate 30, arginine 107, and 129–131 (YGN).

This sequence belongs to the RbsD / FucU family. FucU mutarotase subfamily. In terms of assembly, homodecamer.

The protein localises to the cytoplasm. It catalyses the reaction alpha-L-fucose = beta-L-fucose. The protein operates within carbohydrate metabolism; L-fucose metabolism. In terms of biological role, involved in the anomeric conversion of L-fucose. The sequence is that of L-fucose mutarotase from Salmonella arizonae (strain ATCC BAA-731 / CDC346-86 / RSK2980).